The chain runs to 204 residues: Recombination protein RecR (204 aa).

The C4-type zinc finger occupies 58–75 (CSVCQNITDLGVDPCHIC). In terms of domain architecture, Toprim spans 83–181 (SVICVVESPT…NVTRIARGIP (99 aa)).

The protein belongs to the RecR family.

Its function is as follows. May play a role in DNA repair. It seems to be involved in an RecBC-independent recombinational process of DNA repair. It may act with RecF and RecO. In Chlorobaculum tepidum (strain ATCC 49652 / DSM 12025 / NBRC 103806 / TLS) (Chlorobium tepidum), this protein is Recombination protein RecR.